The following is a 176-amino-acid chain: Tumor necrosis factor receptor superfamily member 23 (176 aa).

An N-terminal signal peptide occupies residues 1-29 (MVTFSHVSSLSHWFLLLLLLNLFLPVIFA). 3 TNFR-Cys repeats span residues 37–72 (NCPD…QGQC), 74–114 (KCHP…DRKC), and 115–155 (ECQI…NTVC). 9 disulfides stabilise this stretch: Cys38/Cys49, Cys50/Cys63, Cys53/Cys72, Cys75/Cys90, Cys93/Cys106, Cys96/Cys114, Cys116/Cys131, Cys134/Cys147, and Cys137/Cys155. N-linked (GlcNAc...) asparagine glycosylation occurs at Asn148. A lipid anchor (GPI-anchor amidated cysteine) is attached at Cys155. A propeptide spans 156–176 (SSSVSNPRNWLFLLMLIVFCI) (removed in mature form).

Ubiquitous.

It is found in the cell membrane. In terms of biological role, receptor for the cytotoxic ligand TRAIL. Lacks a cytoplasmic death domain and hence is not capable of inducing apoptosis. May protect cells against TRAIL mediated apoptosis through ligand competition. Cannot induce the NF-kappa-B pathway. This is Tumor necrosis factor receptor superfamily member 23 (Tnfrsf23) from Mus musculus (Mouse).